The sequence spans 193 residues: Probable DNA-directed RNA polymerase subunit delta (193 aa).

Residues 14–83 (LSMIEVARAI…GDNKWGLRSW (70 aa)) form the HTH HARE-type domain. 2 stretches are compositionally biased toward acidic residues: residues 119-133 (EDAIDYNDDDPEDEN) and 143-193 (YDND…ETND). The disordered stretch occupies residues 119–193 (EDAIDYNDDD…DDDYEDETND (75 aa)).

This sequence belongs to the RpoE family. As to quaternary structure, RNAP is composed of a core of 2 alpha, a beta and a beta' subunits. The core is associated with a delta subunit and one of several sigma factors.

Its function is as follows. Participates in both the initiation and recycling phases of transcription. In the presence of the delta subunit, RNAP displays an increased specificity of transcription, a decreased affinity for nucleic acids, and an increased efficiency of RNA synthesis because of enhanced recycling. The chain is Probable DNA-directed RNA polymerase subunit delta from Streptococcus thermophilus (strain CNRZ 1066).